Here is a 124-residue protein sequence, read N- to C-terminus: Small ribosomal subunit protein uS12 (124 aa).

The disordered stretch occupies residues 8 to 30; the sequence is IRSARQDTEKQTKSPALKSCPQR. Asp89 carries the 3-methylthioaspartic acid modification. Positions 103-124 are disordered; that stretch reads DTAGVKDRKQSRSKYGAKKPKA. Residues 113 to 124 show a composition bias toward basic residues; the sequence is SRSKYGAKKPKA.

The protein belongs to the universal ribosomal protein uS12 family. Part of the 30S ribosomal subunit. Contacts proteins S8 and S17. May interact with IF1 in the 30S initiation complex.

Functionally, with S4 and S5 plays an important role in translational accuracy. In terms of biological role, interacts with and stabilizes bases of the 16S rRNA that are involved in tRNA selection in the A site and with the mRNA backbone. Located at the interface of the 30S and 50S subunits, it traverses the body of the 30S subunit contacting proteins on the other side and probably holding the rRNA structure together. The combined cluster of proteins S8, S12 and S17 appears to hold together the shoulder and platform of the 30S subunit. This is Small ribosomal subunit protein uS12 from Trichodesmium erythraeum (strain IMS101).